The primary structure comprises 134 residues: Natriuretic peptides B (134 aa).

An N-terminal signal peptide occupies residues 1–26 (MDPQTAPSRALLLLLFLHLAFLGGRS). Serine 41 is a glycosylation site (O-linked (Xyl...) (chondroitin sulfate) serine). O-linked (HexNAc...) threonine; Partial glycosylation occurs at threonine 62. 2 O-linked (HexNAc...) serine glycosylation sites follow: serine 63 and serine 70. Threonine 74 carries O-linked (HexNAc...) threonine glycosylation. Serine 79 carries an O-linked (HexNAc...) serine glycan. Residue threonine 84 is glycosylated (O-linked (HexNAc...) threonine; Partial). An O-linked (HexNAc...) threonine glycan is attached at threonine 97. A disulfide bridge links cysteine 112 with cysteine 128.

It belongs to the natriuretic peptide family. Post-translationally, the precursor molecule is proteolytically cleaved by the endoproteases FURIN or CORIN at Arg-102 to produce brain natriuretic peptide 32 and NT-proBNP. This likely occurs after it has been secreted into the blood, either during circulation or in the target cells. CORIN also cleaves the precursor molecule at additional residues including Arg-99 and possibly Lys-105. In patients with heart failure, processing and degradation of natriuretic peptides B occurs but is delayed, possibly due to a decrease in enzyme level or activity of CORIN and DPP4. In terms of processing, undergoes further proteolytic cleavage by various proteases such as DPP4, MME and possibly FAP, to give rise to a variety of shorter peptides. Cleaved at Pro-104 by the prolyl endopeptidase FAP (seprase) activity (in vitro). Degraded by IDE. During IDE degradation, the resulting products initially increase the activation of NPR1 and can also stimulate NPR2 to produce cGMP before the fragments are completely degraded and inactivated by IDE (in vitro). O-glycosylated on at least seven residues. In cardiomyocytes, glycosylation at Thr-97 is essential for the stability and processing of the extracellular natriuretic peptides B. Glycosylation, especially at Thr-97, may also be important for brain natriuretic peptide 32 stability and/or extracellular distribution. Glycosylation at Thr-97 appears to inhibit FURIN- or CORIN-mediated proteolytic processing, at least in HEK293 cells. Detected in the cardiac atria (at protein level). Detected in the kidney distal tubular cells (at protein level).

The protein resides in the secreted. Functionally, cardiac hormone that plays a key role in mediating cardio-renal homeostasis. May also function as a paracrine antifibrotic factor in the heart. Acts by specifically binding and stimulating NPR1 to produce cGMP, which in turn activates effector proteins that drive various biological responses. Involved in regulating the extracellular fluid volume and maintaining the fluid-electrolyte balance through natriuresis, diuresis, vasorelaxation, and inhibition of renin and aldosterone secretion. Binds the clearance receptor NPR3. May affect cardio-renal homeostasis. Able to promote the production of cGMP although its potency is very low compared to brain natriuretic peptide 32. In terms of biological role, may have a role in cardio-renal homeostasis. Able to promote the production of cGMP. This is Natriuretic peptides B (NPPB) from Homo sapiens (Human).